The chain runs to 113 residues: MDKSVRLRDNREYNVVYKRGKTYYNRNFSLVVYNSKKGTRIGFSVTKKYGNAVERNRIKRKLREIVRLNFSEFDKGLDMVIIPKKNTEDLTYKQLESALLHVCRKASNKKCQK.

The protein belongs to the RnpA family. Consists of a catalytic RNA component (M1 or rnpB) and a protein subunit.

The enzyme catalyses Endonucleolytic cleavage of RNA, removing 5'-extranucleotides from tRNA precursor.. Functionally, RNaseP catalyzes the removal of the 5'-leader sequence from pre-tRNA to produce the mature 5'-terminus. It can also cleave other RNA substrates such as 4.5S RNA. The protein component plays an auxiliary but essential role in vivo by binding to the 5'-leader sequence and broadening the substrate specificity of the ribozyme. This is Ribonuclease P protein component from Finegoldia magna (strain ATCC 29328 / DSM 20472 / WAL 2508) (Peptostreptococcus magnus).